The chain runs to 60 residues: Naniproin (60 aa).

Disulfide bonds link Cys-3–Cys-21, Cys-14–Cys-38, Cys-42–Cys-53, and Cys-54–Cys-59.

The protein belongs to the three-finger toxin family. Short-chain subfamily. Type IA cytotoxin sub-subfamily. As to quaternary structure, monomer in solution; Homodimer and oligomer in the presence of negatively charged lipids forming a pore with a size ranging between 20 and 30 angstroms. As to expression, expressed by the venom gland.

It is found in the secreted. It localises to the target cell membrane. In terms of biological role, basic protein that binds to cell membrane and depolarizes cardiomyocytes. This cytotoxin also possesses lytic activity on many other cells, including red blood cells. Interaction with sulfatides in the cell membrane induces pore formation and cell internalization and is responsible for cytotoxicity in cardiomyocytes. It targets the mitochondrial membrane and induces mitochondrial swelling and fragmentation. Inhibits protein kinases C. It binds to the integrin alpha-V/beta-3 with a moderate affinity. This is Naniproin from Naja nigricollis (Black-necked spitting cobra).